A 286-amino-acid polypeptide reads, in one-letter code: 33 kDa chaperonin (286 aa).

2 cysteine pairs are disulfide-bonded: cysteine 225–cysteine 227 and cysteine 258–cysteine 261.

The protein belongs to the HSP33 family. In terms of processing, under oxidizing conditions two disulfide bonds are formed involving the reactive cysteines. Under reducing conditions zinc is bound to the reactive cysteines and the protein is inactive.

It is found in the cytoplasm. Redox regulated molecular chaperone. Protects both thermally unfolding and oxidatively damaged proteins from irreversible aggregation. Plays an important role in the bacterial defense system toward oxidative stress. The polypeptide is 33 kDa chaperonin (Shewanella sp. (strain MR-4)).